The following is a 148-amino-acid chain: Large ribosomal subunit protein bL9 (148 aa).

The protein belongs to the bacterial ribosomal protein bL9 family.

Functionally, binds to the 23S rRNA. The chain is Large ribosomal subunit protein bL9 from Thermus thermophilus (strain ATCC BAA-163 / DSM 7039 / HB27).